Reading from the N-terminus, the 344-residue chain is Nicotinate-nucleotide--dimethylbenzimidazole phosphoribosyltransferase (344 aa).

Glu311 acts as the Proton acceptor in catalysis.

The protein belongs to the CobT family.

It carries out the reaction 5,6-dimethylbenzimidazole + nicotinate beta-D-ribonucleotide = alpha-ribazole 5'-phosphate + nicotinate + H(+). It functions in the pathway nucleoside biosynthesis; alpha-ribazole biosynthesis; alpha-ribazole from 5,6-dimethylbenzimidazole: step 1/2. Functionally, catalyzes the synthesis of alpha-ribazole-5'-phosphate from nicotinate mononucleotide (NAMN) and 5,6-dimethylbenzimidazole (DMB). The protein is Nicotinate-nucleotide--dimethylbenzimidazole phosphoribosyltransferase of Aromatoleum aromaticum (strain DSM 19018 / LMG 30748 / EbN1) (Azoarcus sp. (strain EbN1)).